The chain runs to 287 residues: Inorganic pyrophosphatase (287 aa).

A Phosphothreonine modification is found at Thr65. Arg79 contributes to the diphosphate binding site. Tyr90 serves as the catalytic Proton donor. Positions 116, 121, and 153 each coordinate Mg(2+). Lys239 is covalently cross-linked (Glycyl lysine isopeptide (Lys-Gly) (interchain with G-Cter in ubiquitin)). Phosphothreonine is present on Thr251. Ser266 bears the Phosphoserine mark. A Glycyl lysine isopeptide (Lys-Gly) (interchain with G-Cter in ubiquitin) cross-link involves residue Lys279. A Phosphoserine modification is found at Ser286.

It belongs to the PPase family. Homodimer. The cofactor is Mg(2+).

Its subcellular location is the cytoplasm. It carries out the reaction diphosphate + H2O = 2 phosphate + H(+). In Saccharomyces cerevisiae (strain ATCC 204508 / S288c) (Baker's yeast), this protein is Inorganic pyrophosphatase (IPP1).